The primary structure comprises 527 residues: GMP synthase [glutamine-hydrolyzing] (527 aa).

The 199-residue stretch at lysine 4–aspartate 202 folds into the Glutamine amidotransferase type-1 domain. Catalysis depends on cysteine 81, which acts as the Nucleophile. Active-site residues include histidine 176 and glutamate 178. One can recognise a GMPS ATP-PPase domain in the interval tryptophan 203–arginine 395. Position 230–236 (serine 230–serine 236) interacts with ATP.

As to quaternary structure, homodimer.

It catalyses the reaction XMP + L-glutamine + ATP + H2O = GMP + L-glutamate + AMP + diphosphate + 2 H(+). It functions in the pathway purine metabolism; GMP biosynthesis; GMP from XMP (L-Gln route): step 1/1. In terms of biological role, catalyzes the synthesis of GMP from XMP. This Paraburkholderia xenovorans (strain LB400) protein is GMP synthase [glutamine-hydrolyzing].